The primary structure comprises 156 residues: Small ribosomal subunit protein uS7 (156 aa).

This sequence belongs to the universal ribosomal protein uS7 family. Part of the 30S ribosomal subunit. Contacts proteins S9 and S11.

Its function is as follows. One of the primary rRNA binding proteins, it binds directly to 16S rRNA where it nucleates assembly of the head domain of the 30S subunit. Is located at the subunit interface close to the decoding center, probably blocks exit of the E-site tRNA. In Agrobacterium fabrum (strain C58 / ATCC 33970) (Agrobacterium tumefaciens (strain C58)), this protein is Small ribosomal subunit protein uS7.